A 681-amino-acid chain; its full sequence is Serine/threonine-protein kinase PAK 6 (681 aa).

Disordered stretches follow at residues 1–30 (MFRKKKKKRPEISAPQNFQHRVHTSFDPKE), 200–256 (QSSP…ESSL), and 268–355 (TAAT…PRTW). Residues 12–25 (ISAPQNFQHRVHTS) form the CRIB domain. The segment at 26-406 (FDPKEGKFVG…VVDQGDPRLL (381 aa)) is linker. Low complexity-rich tracts occupy residues 201–212 (SSPPGASPPTGT) and 268–278 (TAATAPPSSSK). Positions 308 to 333 (SLPSDQPVGTFSPLTTSDTSSPQKSL) are enriched in polar residues. Residues 407–658 (LDSYVKIGEG…AQELLDHPFL (252 aa)) enclose the Protein kinase domain. Residues 413–421 (IGEGSTGIV) and Lys436 each bind ATP. Asp526 serves as the catalytic Proton acceptor. Position 560 is a phosphoserine; by autocatalysis (Ser560).

The protein belongs to the protein kinase superfamily. STE Ser/Thr protein kinase family. STE20 subfamily. In terms of assembly, interacts tightly with GTP-bound but not GDP-bound CDC42/p21 and RAC1. Interacts with the androgen receptor AR. Interacts with IQGAP1 and PPM1B. Autophosphorylated. Phosphorylated by MAP2K6/MAPKK6, leading to PAK6 activation.

The protein resides in the cytoplasm. The protein localises to the nucleus. It carries out the reaction L-seryl-[protein] + ATP = O-phospho-L-seryl-[protein] + ADP + H(+). The catalysed reaction is L-threonyl-[protein] + ATP = O-phospho-L-threonyl-[protein] + ADP + H(+). Serine/threonine protein kinase that plays a role in the regulation of gene transcription. The kinase activity is induced by various effectors including AR or MAP2K6/MAPKK6. Phosphorylates the DNA-binding domain of androgen receptor/AR and thereby inhibits AR-mediated transcription. Also inhibits ESR1-mediated transcription. May play a role in cytoskeleton regulation by interacting with IQGAP1. May protect cells from apoptosis through phosphorylation of BAD. The chain is Serine/threonine-protein kinase PAK 6 (PAK6) from Pongo abelii (Sumatran orangutan).